Here is a 345-residue protein sequence, read N- to C-terminus: Tropomodulin-4 (345 aa).

Residues 42-63 are disordered; that stretch reads NMLLPAGLRQRDQTKKSPTGPL.

It belongs to the tropomodulin family. As to quaternary structure, binds to the N-terminus of tropomyosin and to actin.

It localises to the cytoplasm. It is found in the cytoskeleton. Its function is as follows. Blocks the elongation and depolymerization of the actin filaments at the pointed end. The Tmod/TM complex contributes to the formation of the short actin protofilament, which in turn defines the geometry of the membrane skeleton. The chain is Tropomodulin-4 (TMOD4) from Bos taurus (Bovine).